A 338-amino-acid chain; its full sequence is 4-hydroxy-3-methylbut-2-enyl diphosphate reductase (338 aa).

C21 is a binding site for [4Fe-4S] cluster. Positions 50 and 83 each coordinate (2E)-4-hydroxy-3-methylbut-2-enyl diphosphate. Dimethylallyl diphosphate contacts are provided by H50 and H83. Isopentenyl diphosphate is bound by residues H50 and H83. C105 lines the [4Fe-4S] cluster pocket. (2E)-4-hydroxy-3-methylbut-2-enyl diphosphate is bound at residue H133. H133 contributes to the dimethylallyl diphosphate binding site. H133 is an isopentenyl diphosphate binding site. The Proton donor role is filled by E135. Residue T173 coordinates (2E)-4-hydroxy-3-methylbut-2-enyl diphosphate. C203 is a binding site for [4Fe-4S] cluster. (2E)-4-hydroxy-3-methylbut-2-enyl diphosphate contacts are provided by S231, S232, N233, and S276. 4 residues coordinate dimethylallyl diphosphate: S231, S232, N233, and S276. Residues S231, S232, N233, and S276 each coordinate isopentenyl diphosphate.

This sequence belongs to the IspH family. Requires [4Fe-4S] cluster as cofactor.

The enzyme catalyses isopentenyl diphosphate + 2 oxidized [2Fe-2S]-[ferredoxin] + H2O = (2E)-4-hydroxy-3-methylbut-2-enyl diphosphate + 2 reduced [2Fe-2S]-[ferredoxin] + 2 H(+). The catalysed reaction is dimethylallyl diphosphate + 2 oxidized [2Fe-2S]-[ferredoxin] + H2O = (2E)-4-hydroxy-3-methylbut-2-enyl diphosphate + 2 reduced [2Fe-2S]-[ferredoxin] + 2 H(+). Its pathway is isoprenoid biosynthesis; dimethylallyl diphosphate biosynthesis; dimethylallyl diphosphate from (2E)-4-hydroxy-3-methylbutenyl diphosphate: step 1/1. It participates in isoprenoid biosynthesis; isopentenyl diphosphate biosynthesis via DXP pathway; isopentenyl diphosphate from 1-deoxy-D-xylulose 5-phosphate: step 6/6. In terms of biological role, catalyzes the conversion of 1-hydroxy-2-methyl-2-(E)-butenyl 4-diphosphate (HMBPP) into a mixture of isopentenyl diphosphate (IPP) and dimethylallyl diphosphate (DMAPP). Acts in the terminal step of the DOXP/MEP pathway for isoprenoid precursor biosynthesis. This Streptomyces avermitilis (strain ATCC 31267 / DSM 46492 / JCM 5070 / NBRC 14893 / NCIMB 12804 / NRRL 8165 / MA-4680) protein is 4-hydroxy-3-methylbut-2-enyl diphosphate reductase.